Reading from the N-terminus, the 195-residue chain is tRNA (pseudouridine(54)-N(1))-methyltransferase (195 aa).

Leucine 129 lines the S-adenosyl-L-methionine pocket.

The protein belongs to the methyltransferase superfamily. TrmY family. As to quaternary structure, homodimer.

Its subcellular location is the cytoplasm. It carries out the reaction pseudouridine(54) in tRNA + S-adenosyl-L-methionine = N(1)-methylpseudouridine(54) in tRNA + S-adenosyl-L-homocysteine + H(+). In terms of biological role, specifically catalyzes the N1-methylation of pseudouridine at position 54 (Psi54) in tRNAs. This Methanocorpusculum labreanum (strain ATCC 43576 / DSM 4855 / Z) protein is tRNA (pseudouridine(54)-N(1))-methyltransferase.